A 182-amino-acid polypeptide reads, in one-letter code: Large ribosomal subunit protein uL10 (182 aa).

Belongs to the universal ribosomal protein uL10 family. In terms of assembly, part of the ribosomal stalk of the 50S ribosomal subunit. The N-terminus interacts with L11 and the large rRNA to form the base of the stalk. The C-terminus forms an elongated spine to which L12 dimers bind in a sequential fashion forming a multimeric L10(L12)X complex.

Functionally, forms part of the ribosomal stalk, playing a central role in the interaction of the ribosome with GTP-bound translation factors. The polypeptide is Large ribosomal subunit protein uL10 (Janthinobacterium sp. (strain Marseille) (Minibacterium massiliensis)).